A 516-amino-acid polypeptide reads, in one-letter code: 7-chloro-L-tryptophan 6-halogenase KtzR (516 aa).

Residues G6, T8, A9, E42, and A43 each contribute to the FAD site. K71 is a catalytic residue. V195 lines the FAD pocket. Residues T357 and G358 each contribute to the chloride site. Position 359 (I359) interacts with FAD.

This sequence belongs to the flavin-dependent halogenase family. Bacterial tryptophan halogenase subfamily.

It carries out the reaction 7-chloro-L-tryptophan + FADH2 + chloride + O2 = 6,7-dichloro-L-tryptophan + FAD + 2 H2O. Its function is as follows. Involved in the biosynthesis of kutznerides, actinomycete-derived antifungal and antimicrobial cyclic hexadepsipeptides. Together with KtzQ, catalyzes the regiospecific dichlorination of L-tryptophan (L-Trp) to produce 6,7-dichloro-L-tryptophan. KtzR catalyzes the chlorination of 7-chloro-L-tryptophan at C6 position to yield 6,7-dichloro-L-tryptophan. Can also use L-Trp as substrate and form 6-chloro-L-tryptophan, but has a 120-fold preference for 7-chloro-L-tryptophan over L-Trp. Cannot use piperazic acid or gamma,delta-dehydropiperazic acid. The chain is 7-chloro-L-tryptophan 6-halogenase KtzR from Kutzneria sp. (strain 744).